A 2022-amino-acid chain; its full sequence is Transient receptor potential cation channel subfamily M member 6 (2022 aa).

At 1-741 the chain is on the cytoplasmic side; that stretch reads MKEQPVLERL…MWMGRLKMRK (741 aa). The helical transmembrane segment at 742 to 762 threads the bilayer; sequence NSWLKIIISIILPPTILTLEF. The Extracellular segment spans residues 763–841; the sequence is KSKAEMSHVP…YEFYSAPIVK (79 aa). The helical transmembrane segment at 842 to 862 threads the bilayer; the sequence is FWFYTMAYLAFLMLFTYTVLV. Topologically, residues 863 to 905 are cytoplasmic; the sequence is EMQPQPSVQEWLVSIYIFTNAIEVVREICISEPGKFTQKVKVW. A helical transmembrane segment spans residues 906 to 926; it reads ISEYWNLTETVAIGLFSAGFV. The Extracellular portion of the chain corresponds to 927-939; it reads LRWGDPPFHTAGR. A helical transmembrane segment spans residues 940 to 960; that stretch reads LIYCIDIIFWFSRLLDFFAVN. Topologically, residues 961–972 are cytoplasmic; that stretch reads QHAGPYVTMIAK. The chain crosses the membrane as a helical span at residues 973–993; it reads MTANMFYIVIIMAIVLLSFGV. The Extracellular segment spans residues 994–1012; it reads ARKAILSPKEPPSWSLARD. An intramembrane region (pore-forming) is located at residues 1013–1033; it reads IVFEPYWMIYGEVYAGEIDVC. Residues 1034 to 1047 are Extracellular-facing; sequence SSQPSCPPGSFLTP. A helical membrane pass occupies residues 1048–1068; the sequence is FLQAVYLFVQYIIMVNLLIAF. Over 1069-2022 the chain is Cytoplasmic; sequence FNNVYLDMES…RNSPEDDMQL (954 aa). A disordered region spans residues 1479-1516; sequence TCDSDSSRSEQHQKQAQDSSLSDNSTRSAQSSECSEVG. The segment covering 1483-1493 has biased composition (basic and acidic residues); it reads DSSRSEQHQKQ. Polar residues predominate over residues 1494 to 1512; the sequence is AQDSSLSDNSTRSAQSSEC. An Alpha-type protein kinase domain is found at 1750 to 1980; sequence NLDKSMSSWS…CCRKLKLPDL (231 aa). The ADP site is built by G1777, G1778, L1779, R1780, and K1804. Phosphothreonine; by autocatalysis is present on T1851. Residues E1876 and M1879 each coordinate ADP. A Zn(2+)-binding site is contributed by H1909. Residue D1923 is the Proton acceptor of the active site. D1933 lines the ADP pocket. Residues H1966, C1968, and C1972 each contribute to the Zn(2+) site. Residues 1997–2022 are disordered; the sequence is EIKIESAEEPPARETGRNSPEDDMQL. Positions 1998–2016 are enriched in basic and acidic residues; the sequence is IKIESAEEPPARETGRNSP.

The protein in the C-terminal section; belongs to the protein kinase superfamily. Alpha-type protein kinase family. ALPK subfamily. In the N-terminal section; belongs to the transient receptor (TC 1.A.4) family. LTrpC subfamily. TRPM6 sub-subfamily. Homomers. Forms heteromers with TRPM7; TRPM6 increases the current amplitude of TRPM6/7 heteromers as compared to TRPM7 homomer. Interacts (via kinase domain) with RACK1. In terms of processing, autophosphorylated; autophosphorylation controlls the protein kinase activity of TRPM6 towards their substrates. Autophosphorylation of Thr-1851 in the kinase domain is essential for the inhibitory effect of RACK1. The C-terminus of TRPM6 is proteolytically cleaved in vivo, in a cell type-specific fashion, releasing the kinase module from the transmembrane domain. The cleaved kinase fragments are translocated to the nucleus to phosphorylate histones and regulate gene expression. As to expression, highly expressed in kidney and colon. Isoform TRPM6a and isoform TRPM6b, are coexpressed with TRPM7 in kidney, and testis, and are also found in several cell lines of lung origin. Isoform TRPM6c is detected only in testis and in NCI-H510A small cell lung carcinoma cells.

It localises to the cell membrane. The protein resides in the apical cell membrane. It is found in the nucleus. It carries out the reaction L-seryl-[protein] + ATP = O-phospho-L-seryl-[protein] + ADP + H(+). The enzyme catalyses L-threonyl-[protein] + ATP = O-phospho-L-threonyl-[protein] + ADP + H(+). The catalysed reaction is Mg(2+)(in) = Mg(2+)(out). It catalyses the reaction Ca(2+)(in) = Ca(2+)(out). It carries out the reaction Zn(2+)(in) = Zn(2+)(out). Strongly inhibited by intracellular Mg(2+); unlikely to be active at physiological levels of intracellular Mg(2+). In the heteromeric TRPM6-TRPM7 channels complexes, TRPM7 are able to offset the very high sensitivity of TRPM6 to cytosolic Mg(2+) to physiologically relevant concentrations, whereas TRPM6 relieve TRPM7 from the inhibitory action of Mg-ATP. Consequently, the association of TRPM6 with TRPM7 allow for high constitutive activity of TRPM6/7 in the presence of physiological levels of Mg(2+) and Mg-ATP. The kinase activity is controlled through the autophosphorylation of a serine/threonine-rich region located to the N-terminal of the catalytic domain. Its function is as follows. Bifunctional protein that combines an ion channel with an intrinsic kinase domain, enabling it to modulate cellular functions either by conducting ions through the pore or by phosphorylating downstream proteins via its kinase domain. Crucial for Mg(2+) homeostasis. Has an important role in epithelial Mg(2+) transport and in the active Mg(2+) absorption in the gut and kidney. However, whether TRPM6 forms functional homomeric channels by itself or functions primarily as a subunit of heteromeric TRPM6-TRPM7 channels, is still under debate. The C-terminal kinase domain can be cleaved from the channel segment in a cell-type-specific fashion. The cleaved kinase fragments can translocate to the nucleus, and bind chromatin-remodeling complex proteins to ultimately phosphorylate specific Ser/Thr residues of histones known to be functionally important for cell differentiation and development. The polypeptide is Transient receptor potential cation channel subfamily M member 6 (TRPM6) (Homo sapiens (Human)).